A 344-amino-acid chain; its full sequence is Meiotic recombination protein DMC1 homolog (344 aa).

The interval 1 to 22 (MMASLKAEETSQMQLVEREEND) is disordered. 133–140 (GEFRSGKT) contributes to the ATP binding site. Position 235 (R235) interacts with dsDNA. Residues R235, F238, R241, R247, and R315 each coordinate ssDNA. Residues R241 and R247 each coordinate dsDNA.

It belongs to the RecA family. DMC1 subfamily. As to quaternary structure, double stacked ring-shaped homooctamer. Interacts with BRCA2A and BRCA2B. In terms of tissue distribution, expressed in mitotic and/or meiotic tissues. Expressed in roots, leaves and anthers and carpels of young fower buds.

The protein localises to the nucleus. Its function is as follows. May participate in meiotic recombination, specifically in homologous strand assimilation, which is required for the resolution of meiotic double-strand breaks. Mediates interhomolog recombination during meiosis. This is Meiotic recombination protein DMC1 homolog from Arabidopsis thaliana (Mouse-ear cress).